The sequence spans 220 residues: Deoxyribose-phosphate aldolase 1 (220 aa).

Aspartate 89 functions as the Proton donor/acceptor in the catalytic mechanism. The active-site Schiff-base intermediate with acetaldehyde is lysine 151. The Proton donor/acceptor role is filled by lysine 180.

Belongs to the DeoC/FbaB aldolase family. DeoC type 1 subfamily.

The protein localises to the cytoplasm. The catalysed reaction is 2-deoxy-D-ribose 5-phosphate = D-glyceraldehyde 3-phosphate + acetaldehyde. Its pathway is carbohydrate degradation; 2-deoxy-D-ribose 1-phosphate degradation; D-glyceraldehyde 3-phosphate and acetaldehyde from 2-deoxy-alpha-D-ribose 1-phosphate: step 2/2. Its function is as follows. Catalyzes a reversible aldol reaction between acetaldehyde and D-glyceraldehyde 3-phosphate to generate 2-deoxy-D-ribose 5-phosphate. In Staphylococcus aureus (strain COL), this protein is Deoxyribose-phosphate aldolase 1.